The primary structure comprises 360 residues: tRNA (guanine(9)-N1)-methyltransferase (360 aa).

Positions 1 to 77 (MENQDTEQSQ…RRKERIKEAE (77 aa)) are disordered. 2 stretches are compositionally biased toward basic and acidic residues: residues 8 to 24 (QSQKRSGSEVEKDDFKR) and 33 to 55 (MTKREYKRQLKQQRWEETKDEYK). Residues 56 to 67 (QKKREKKKAARE) are compositionally biased toward basic residues. A compositionally biased stretch (basic and acidic residues) spans 68–77 (RRKERIKEAE). The SAM-dependent MTase TRM10-type domain maps to 94–293 (RAKVAPQEQI…EVLPPRKVKG (200 aa)). S-adenosyl-L-methionine-binding positions include 199-200 (LT), G219, 223-227 (DKNRY), C231, L245, and 257-259 (QVL). The active-site Proton acceptor is D223. Residues 291–360 (VKGKLTHGSD…SDEPSKGADH (70 aa)) are disordered. Over residues 297–306 (HGSDPEKSIE) the composition is skewed to basic and acidic residues. The segment covering 307 to 324 (PSEVSEQPVSSEQSEQPV) has biased composition (low complexity). Residues 328–343 (QPVSSEQPVLSEQPVL) show a composition bias toward polar residues.

This sequence belongs to the class IV-like SAM-binding methyltransferase superfamily. TRM10 family. As to quaternary structure, monomer.

The protein localises to the cytoplasm. It localises to the nucleus. The enzyme catalyses guanosine(9) in tRNA + S-adenosyl-L-methionine = N(1)-methylguanosine(9) in tRNA + S-adenosyl-L-homocysteine + H(+). In terms of biological role, S-adenosyl-L-methionine-dependent guanine N(1)-methyltransferase that catalyzes the formation of N(1)-methylguanine at position 9 (m1G9) in cytoplasmic tRNA. This chain is tRNA (guanine(9)-N1)-methyltransferase, found in Debaryomyces hansenii (strain ATCC 36239 / CBS 767 / BCRC 21394 / JCM 1990 / NBRC 0083 / IGC 2968) (Yeast).